We begin with the raw amino-acid sequence, 86 residues long: MKGIAMLLVSCLLFSFLSTNLAKELKWCPSKDVFNGSCTDTGSPSYTCFLDLLGSKSASAMPKNCKCTPLPHNRRQCDCFVVCDSN.

The first 22 residues, 1-22, serve as a signal peptide directing secretion; the sequence is MKGIAMLLVSCLLFSFLSTNLA. 4 cysteine pairs are disulfide-bonded: Cys-28–Cys-83, Cys-38–Cys-67, Cys-48–Cys-77, and Cys-65–Cys-79.

Belongs to the DEFL family.

Its subcellular location is the secreted. The protein is Putative defensin-like protein 244 (SCRL11) of Arabidopsis thaliana (Mouse-ear cress).